A 420-amino-acid chain; its full sequence is Tyrosine--tRNA ligase (420 aa).

Tyr-36 contributes to the L-tyrosine binding site. The 'HIGH' region motif lies at 41–50 (PTADSLHIGH). Residues Tyr-170 and Gln-174 each contribute to the L-tyrosine site. Residues 231-235 (KFGKS) carry the 'KMSKS' region motif. Position 234 (Lys-234) interacts with ATP. Residues 353–420 (TNIVEVLIET…KKKYFMVNYQ (68 aa)) form the S4 RNA-binding domain.

The protein belongs to the class-I aminoacyl-tRNA synthetase family. TyrS type 1 subfamily. In terms of assembly, homodimer.

Its subcellular location is the cytoplasm. The enzyme catalyses tRNA(Tyr) + L-tyrosine + ATP = L-tyrosyl-tRNA(Tyr) + AMP + diphosphate + H(+). In terms of biological role, catalyzes the attachment of tyrosine to tRNA(Tyr) in a two-step reaction: tyrosine is first activated by ATP to form Tyr-AMP and then transferred to the acceptor end of tRNA(Tyr). The protein is Tyrosine--tRNA ligase of Staphylococcus aureus (strain bovine RF122 / ET3-1).